The chain runs to 369 residues: MNKAYYIGLMSGTSMDGVDAVLVDFAGEQPQLIATHTEAIPSHLLKGLQRLCLPGNDEINRLGRLDRSVGKLFALAVNNLLAKAQIAKEDIIAIGSHGQTVRHMPNLEVGFTLQIGDPNTIATETGIDVIADFRRKDIALGGQGAPLVPAFHQQTFAQVGKKRVILNIGGIANITYLTGNREEVLGFDTGPGNTLIDAWIQQVKNEPYDKDGAWAASGNTDQQLLAQLLSHPYFSLAYPKSTGRELFNQAWLEQQLSEFNQLDEEDIQSTLLDLTCHSIARDILKLAPAGELFVCGGGAFNTELMQRLAALLPDYHLDTTSALGVDPKWAEGIAFAWLAMRHNLGLPANLPAVTGASREAVLGGRFSAK.

ATP is bound at residue 12–19; sequence GTSMDGVD.

The protein belongs to the anhydro-N-acetylmuramic acid kinase family.

The enzyme catalyses 1,6-anhydro-N-acetyl-beta-muramate + ATP + H2O = N-acetyl-D-muramate 6-phosphate + ADP + H(+). The protein operates within amino-sugar metabolism; 1,6-anhydro-N-acetylmuramate degradation. Its pathway is cell wall biogenesis; peptidoglycan recycling. Catalyzes the specific phosphorylation of 1,6-anhydro-N-acetylmuramic acid (anhMurNAc) with the simultaneous cleavage of the 1,6-anhydro ring, generating MurNAc-6-P. Is required for the utilization of anhMurNAc either imported from the medium or derived from its own cell wall murein, and thus plays a role in cell wall recycling. The protein is Anhydro-N-acetylmuramic acid kinase of Shewanella sp. (strain MR-7).